The primary structure comprises 331 residues: Pyrimidine monooxygenase RutA (331 aa).

FMN contacts are provided by residues 79–80 (IK), Asn-145, Glu-154, 170–171 (RY), and Ser-220. Residues 300–331 (WLTEQSQKDTRSGTDTNVRQMADPTSASAFNH) are disordered. Positions 312 to 331 (GTDTNVRQMADPTSASAFNH) are enriched in polar residues.

Belongs to the NtaA/SnaA/DszA monooxygenase family. RutA subfamily.

The catalysed reaction is uracil + FMNH2 + NADH + O2 = (Z)-3-ureidoacrylate + FMN + NAD(+) + H2O + H(+). The enzyme catalyses thymine + FMNH2 + NADH + O2 = (Z)-2-methylureidoacrylate + FMN + NAD(+) + H2O + H(+). In terms of biological role, catalyzes the pyrimidine ring opening between N-3 and C-4 by an unusual flavin hydroperoxide-catalyzed mechanism, adding oxygen atoms in the process to yield ureidoacrylate peracid, that immediately reacts with FMN forming ureidoacrylate and FMN-N(5)-oxide. The FMN-N(5)-oxide reacts spontaneously with NADH to produce FMN. Requires the flavin reductase RutF to regenerate FMN in vivo. The sequence is that of Pyrimidine monooxygenase RutA from Escherichia coli O7:K1 (strain IAI39 / ExPEC).